Consider the following 503-residue polypeptide: Hemogen (503 aa).

Composition is skewed to basic residues over residues 1 to 10 (MDMGKGRPRL) and 61 to 79 (KKRK…RKRQ). Positions 1 to 129 (MDMGKGRPRL…PLVPSPTKAV (129 aa)) are disordered. The segment at 7–87 (RPRLKLPQMP…RQGNVEQKAE (81 aa)) is necessary for nuclear localization. Residues serine 90, serine 103, serine 124, serine 153, serine 158, serine 171, serine 213, serine 223, serine 228, serine 241, and serine 269 each carry the phosphoserine modification. Threonine 286 is subject to Phosphothreonine. Positions 381–503 (QKTIQESPEP…ENGIYSSALF (123 aa)) are disordered. The segment covering 385–396 (QESPEPEQYSPE) has biased composition (low complexity). A phosphoserine mark is found at serine 387 and serine 394. The segment covering 426–436 (CQDREEPKHSL) has biased composition (basic and acidic residues).

Expressed in hematopoietic precursor cells. Highly expressed in bone marrow, the red pulp of the spleen and round spermatids. Weakly expressed in peripheral blood cells.

It localises to the nucleus. Its function is as follows. Regulates the proliferation and differentiation of hematopoietic cells. Overexpression block the TPA-induced megakaryocytic differentiation in the K562 cell model. May also prevent cell apoptosis through the activation of the nuclear factor-kappa B (NF-kB). The polypeptide is Hemogen (Hemgn) (Mus musculus (Mouse)).